A 98-amino-acid chain; its full sequence is snRNA-activating protein complex subunit 5 (98 aa).

Positions 73–82 (QTTLELSTKS) are enriched in polar residues. Residues 73 to 98 (QTTLELSTKSHVTEEEEEEEEEESDS) are disordered. T85 bears the Phosphothreonine mark. Residues 86-98 (EEEEEEEEEESDS) are compositionally biased toward acidic residues.

In terms of assembly, part of the SNAPc complex composed of 5 subunits: SNAPC1, SNAPC2, SNAPC3, SNAPC4 and SNAPC5. SNAPC5 interacts with SNAPC4.

It localises to the nucleus. Part of the SNAPc complex required for the transcription of both RNA polymerase II and III small-nuclear RNA genes. Binds to the proximal sequence element (PSE), a non-TATA-box basal promoter element common to these 2 types of genes. Recruits TBP and BRF2 to the U6 snRNA TATA box. The chain is snRNA-activating protein complex subunit 5 (SNAPC5) from Homo sapiens (Human).